A 134-amino-acid chain; its full sequence is Ribonuclease P protein component (134 aa).

Belongs to the RnpA family. As to quaternary structure, consists of a catalytic RNA component (M1 or rnpB) and a protein subunit.

The catalysed reaction is Endonucleolytic cleavage of RNA, removing 5'-extranucleotides from tRNA precursor.. In terms of biological role, RNaseP catalyzes the removal of the 5'-leader sequence from pre-tRNA to produce the mature 5'-terminus. It can also cleave other RNA substrates such as 4.5S RNA. The protein component plays an auxiliary but essential role in vivo by binding to the 5'-leader sequence and broadening the substrate specificity of the ribozyme. This is Ribonuclease P protein component from Pseudomonas putida (strain ATCC 700007 / DSM 6899 / JCM 31910 / BCRC 17059 / LMG 24140 / F1).